The chain runs to 219 residues: Ribose-5-phosphate isomerase A (219 aa).

Residues threonine 28–threonine 31, aspartate 81–aspartate 84, and lysine 94–glycine 97 contribute to the substrate site. The active-site Proton acceptor is the glutamate 103. Lysine 121 serves as a coordination point for substrate.

This sequence belongs to the ribose 5-phosphate isomerase family. In terms of assembly, homodimer.

It catalyses the reaction aldehydo-D-ribose 5-phosphate = D-ribulose 5-phosphate. It participates in carbohydrate degradation; pentose phosphate pathway; D-ribose 5-phosphate from D-ribulose 5-phosphate (non-oxidative stage): step 1/1. In terms of biological role, catalyzes the reversible conversion of ribose-5-phosphate to ribulose 5-phosphate. This chain is Ribose-5-phosphate isomerase A, found in Erwinia tasmaniensis (strain DSM 17950 / CFBP 7177 / CIP 109463 / NCPPB 4357 / Et1/99).